Consider the following 252-residue polypeptide: Thiazole synthase (252 aa).

K91 (schiff-base intermediate with DXP) is an active-site residue. 1-deoxy-D-xylulose 5-phosphate contacts are provided by residues G152, 179–180 (AG), and 201–202 (NT).

This sequence belongs to the ThiG family. As to quaternary structure, homotetramer. Forms heterodimers with either ThiH or ThiS.

Its subcellular location is the cytoplasm. The catalysed reaction is [ThiS sulfur-carrier protein]-C-terminal-Gly-aminoethanethioate + 2-iminoacetate + 1-deoxy-D-xylulose 5-phosphate = [ThiS sulfur-carrier protein]-C-terminal Gly-Gly + 2-[(2R,5Z)-2-carboxy-4-methylthiazol-5(2H)-ylidene]ethyl phosphate + 2 H2O + H(+). It participates in cofactor biosynthesis; thiamine diphosphate biosynthesis. Catalyzes the rearrangement of 1-deoxy-D-xylulose 5-phosphate (DXP) to produce the thiazole phosphate moiety of thiamine. Sulfur is provided by the thiocarboxylate moiety of the carrier protein ThiS. In vitro, sulfur can be provided by H(2)S. This Erwinia pyrifoliae (strain DSM 12162 / Ep1/96) protein is Thiazole synthase.